The sequence spans 356 residues: DNA-directed RNA polymerase subunit alpha (356 aa).

The interval 1 to 259 (MIKAAATLKS…KLMTACLTTL (259 aa)) is alpha N-terminal domain (alpha-NTD). Residues 277–356 (FVQVNYNKME…STYGIELKED (80 aa)) form an alpha C-terminal domain (alpha-CTD) region.

The protein belongs to the RNA polymerase alpha chain family. In terms of assembly, in plastids the minimal PEP RNA polymerase catalytic core is composed of four subunits: alpha, beta, beta', and beta''. When a (nuclear-encoded) sigma factor is associated with the core the holoenzyme is formed, which can initiate transcription.

Its subcellular location is the plastid. The protein resides in the chloroplast. It carries out the reaction RNA(n) + a ribonucleoside 5'-triphosphate = RNA(n+1) + diphosphate. Its function is as follows. DNA-dependent RNA polymerase catalyzes the transcription of DNA into RNA using the four ribonucleoside triphosphates as substrates. The protein is DNA-directed RNA polymerase subunit alpha of Ostreococcus tauri.